The following is a 730-amino-acid chain: Nitrogen regulatory protein GLN3 (730 aa).

The disordered stretch occupies residues 1 to 45 (MQDDPENSKLYDLLNSHLDVHGRSNEEPRQTGDSRSQSSGNTGEN). Basic and acidic residues predominate over residues 18–32 (LDVHGRSNEEPRQTG). Residues 33–43 (DSRSQSSGNTG) are compositionally biased toward polar residues. The 9aaTAD motif lies at 129–137 (GEIAQLWDF). Disordered regions lie at residues 187–208 (SSTSNSNINQPSINNNSNTNAQ) and 224–262 (SSSAMNITNNNNSNNSNIQHPFLKKSDSIGLSSSNTTNS). A compositionally biased stretch (low complexity) spans 224–240 (SSSAMNITNNNNSNNSN). Residue S251 is modified to Phosphoserine. Residues 252–262 (IGLSSSNTTNS) are compositionally biased toward polar residues. Phosphoserine is present on residues S267 and S285. Residues 306–330 (CFNCKTFKTPLWRRSPEGNTLCNAC) form a GATA-type zinc finger. Disordered regions lie at residues 355–398 (SKKR…SLQQ) and 449–516 (ANFN…NSQQ). Low complexity-rich tracts occupy residues 370-384 (TPSAPATASTSVTTT), 449-470 (ANFNGASNANLNSNNLMRHNSN), and 482-499 (RSSTSSNTSSSSKSSSRS). S469 bears the Phosphoserine mark. S552 and S562 each carry phosphoserine. 2 disordered regions span residues 593–673 (LHEQ…SNSF) and 696–717 (DVSAGGKISEDNSTKGSSKESS). Composition is skewed to low complexity over residues 596 to 631 (QQQVDVNSNTNTNSNRQNWNSSNSVSTNSRSSNFVS), 641 to 651 (TPVDSPSVSRP), and 658 to 672 (TSLLSQQLQNSESNS).

Its subcellular location is the nucleus. In terms of biological role, positive nitrogen regulatory protein. Required for the activation of transcription of a number of genes (including the allantoin pathway genes) in response to the replacement of glutamine by glutamate as source of nitrogen. Binds the nitrogen upstream activation sequence of GLN1, the gene encoding glutamine synthetase. URE2 may catalytically inactivate GLN3 in response to an increase in the intracellular concentration of glutamine. The protein is Nitrogen regulatory protein GLN3 (GLN3) of Saccharomyces cerevisiae (strain ATCC 204508 / S288c) (Baker's yeast).